The chain runs to 147 residues: uncharacterized protein (147 aa).

4Fe-4S ferredoxin-type domains are found at residues 80–109 (WYPKIDYNRCKNCEKCISFCPRGVYDAENG) and 110–141 (KVVVKYPYSCIVNCNACSIMCCENNAIIFPDE). Positions 89, 92, 95, 99, 119, 123, 126, and 130 each coordinate [4Fe-4S] cluster.

Requires [4Fe-4S] cluster as cofactor.

This is an uncharacterized protein from Methanocaldococcus jannaschii (strain ATCC 43067 / DSM 2661 / JAL-1 / JCM 10045 / NBRC 100440) (Methanococcus jannaschii).